A 462-amino-acid chain; its full sequence is A-type ATP synthase subunit B (462 aa).

The protein belongs to the ATPase alpha/beta chains family. Has multiple subunits with at least A(3), B(3), C, D, E, F, H, I and proteolipid K(x).

The protein resides in the cell membrane. Its function is as follows. Component of the A-type ATP synthase that produces ATP from ADP in the presence of a proton gradient across the membrane. The B chain is a regulatory subunit. This is A-type ATP synthase subunit B from Pyrococcus furiosus (strain ATCC 43587 / DSM 3638 / JCM 8422 / Vc1).